Consider the following 53-residue polypeptide: uncharacterized protein (53 aa).

An N-terminal signal peptide occupies residues 1 to 19 (MKLLTILILFYSFFMNLQA).

This is an uncharacterized protein from Autographa californica nuclear polyhedrosis virus (AcMNPV).